Here is a 276-residue protein sequence, read N- to C-terminus: Homeobox-leucine zipper protein HOX22 (276 aa).

Positions 70 to 130 form a DNA-binding region, homeobox; sequence AGERKRRFTE…NKRARWRSKQ (61 aa). A leucine-zipper region spans residues 129 to 173; sequence KQLEHDYAALRSKYDALHSRVESLKQEKLALTVQLHELRERLRER. Residues 170-212 form a disordered region; the sequence is LREREERSGNGGAATTAASSSSCNGSGSEEVDDDDDKRNAAAG. The span at 182–197 shows a compositional bias: low complexity; that stretch reads AATTAASSSSCNGSGS.

It belongs to the HD-ZIP homeobox family. Class I subfamily. As to expression, expressed in seedlings, roots, stems, leaf sheaths and blades and panicles.

Its subcellular location is the nucleus. Functionally, probable transcription factor. The protein is Homeobox-leucine zipper protein HOX22 (HOX22) of Oryza sativa subsp. japonica (Rice).